An 87-amino-acid polypeptide reads, in one-letter code: Beta-toxin Ct1a (87 aa).

The first 19 residues, 1–19, serve as a signal peptide directing secretion; it reads MNSLLMITACLALIGTVWA. The region spanning 20–85 is the LCN-type CS-alpha/beta domain; the sequence is KEGYLVNHST…VWPLPKKTCN (66 aa). Intrachain disulfides connect C31/C84, C35/C60, C44/C65, and C48/C67. Residue N85 is modified to Asparagine amide.

Belongs to the long (4 C-C) scorpion toxin superfamily. Sodium channel inhibitor family. Beta subfamily. In terms of tissue distribution, expressed by the venom gland.

It localises to the secreted. In terms of biological role, beta toxins bind voltage-independently at site-4 of sodium channels (Nav) and shift the voltage of activation toward more negative potentials thereby affecting sodium channel activation and promoting spontaneous and repetitive firing. Is lethal to mice but does not show toxicity to freshwater shrimp and crickets. This Centruroides tecomanus (Scorpion) protein is Beta-toxin Ct1a.